A 1648-amino-acid polypeptide reads, in one-letter code: eIF-2-alpha kinase GCN2 (1648 aa).

A disordered region spans residues 1-26; the sequence is MAGGRGASGRGRAEPQESYSQRQDHE. Residues 25 to 137 form the RWD domain; that stretch reads HELQALEAIY…HHVQSFLSEH (113 aa). The stretch at 146-205 forms a coiled coil; the sequence is HEEMLERQAQEKQQRLLEARRKEEQEQREILHEIQRRKEEIKEEKKRKEMAKQERLEITS. A Phosphoserine modification is found at Ser230. 2 Protein kinase domains span residues 286–538 and 589–1000; these read VGSD…HSFI and FEEL…SELL. ATP is bound by residues 595–603 and Lys618; that span reads LGKGAFGAV. A disordered region spans residues 661 to 784; it reads PAVPGTPPPD…CNQKDGSHEI (124 aa). Thr666 bears the Phosphothreonine mark. Polar residues-rich tracts occupy residues 673 to 686 and 704 to 722; these read PQAQ…GKTS and LSSS…STRF. 2 stretches are compositionally biased toward acidic residues: residues 730-739 and 753-763; these read SSDEEDEDER and SDSDIIFDNED. Residues 775–784 are compositionally biased toward basic and acidic residues; it reads CNQKDGSHEI. The active-site Proton acceptor is the Asp846. Thr869 is subject to Phosphothreonine. 2 positions are modified to phosphothreonine; by autocatalysis: Thr898 and Thr903. Positions 1021–1492 are histidyl-tRNA synthetase-like; the sequence is IDGKAYRTMM…DHVMQKLRTK (472 aa). An N6-acetyllysine modification is found at Lys1258.

Belongs to the protein kinase superfamily. Ser/Thr protein kinase family. GCN2 subfamily. As to quaternary structure, homodimer; homodimerization is important for kinase activation by uncharged tRNAs. Interacts with GCN1; this interaction stimulates EIF2AK4/GCN2 kinase activity and is impaired by IMPACT upon a variety of stress conditions, such as amino acid depletion, UV-C irradiation, proteasome inhibitor treatment and glucose deprivation. Interacts with DNAJC3; this interaction inhibits EIF2AK4/GCN2 kinase activity during endoplasmic reticulum (ER), hypothermic and amino acid-starving stress conditions. Interacts with MAP3K20; activates EIF2AK4/GCN2 kinase activity in response to moderate ribotoxic stress. Autophosphorylated; autophosphorylation on Thr-898 is increased upon amino acid starvation and in UV irradiation cells and inhibited in presence of IMPACT. In terms of tissue distribution, expressed in liver. Expressed predominantly in the hippocampal CA1 region and the dentate gyrus, and to a lesser degree in CA3 (at protein level). Expressed in liver, lung, brain, kidney, skeletal muscle and testis. Expressed weakly in heart and spleen. Expressed in the hippocampal CA1 and CA3 regions, the dentate gyrus and cerebellum. Isoform 1 is widely expressed. Isoform 1 is expressed in brain, liver, skeletal muscle and testis. Isoform 3 is expressed in lung, brain, testis, prostate and choroid plexus. Isoform 4 is expressed in muscle, lung, kidney, brain, testis and prostate.

The protein resides in the cytoplasm. It carries out the reaction L-seryl-[protein] + ATP = O-phospho-L-seryl-[protein] + ADP + H(+). The catalysed reaction is L-threonyl-[protein] + ATP = O-phospho-L-threonyl-[protein] + ADP + H(+). (Microbial infection) Kinase activity is enhanced by alphavirus genomic RNA sequences. Kinase activity is stimulated upon binding to uncharged tRNAs. Activated by serum starvation (in vitro). In terms of biological role, metabolic-stress sensing protein kinase that phosphorylates the alpha subunit of eukaryotic translation initiation factor 2 (EIF2S1/eIF-2-alpha) in response to low amino acid availability. Plays a role as an activator of the integrated stress response (ISR) required for adaptation to amino acid starvation. EIF2S1/eIF-2-alpha phosphorylation in response to stress converts EIF2S1/eIF-2-alpha into a global protein synthesis inhibitor, leading to a global attenuation of cap-dependent translation, and thus to a reduced overall utilization of amino acids, while concomitantly initiating the preferential translation of ISR-specific mRNAs, such as the transcriptional activator ATF4, and hence allowing ATF4-mediated reprogramming of amino acid biosynthetic gene expression to alleviate nutrient depletion. Required for the translational induction of protein kinase PRKCH following amino acid starvation. Binds uncharged tRNAs. Involved in cell cycle arrest by promoting cyclin D1 mRNA translation repression after the unfolded protein response pathway (UPR) activation or cell cycle inhibitor CDKN1A/p21 mRNA translation activation in response to amino acid deprivation. Plays a role in the consolidation of synaptic plasticity, learning as well as formation of long-term memory. Plays a role in neurite outgrowth inhibition. Plays a role in feeding behavior to maintain amino acid homeostasis; contributes to the innate aversion toward diets of imbalanced amino acid composition. Plays a proapoptotic role in response to glucose deprivation. Promotes global cellular protein synthesis repression in response to UV irradiation independently of the stress-activated protein kinase/c-Jun N-terminal kinase (SAPK/JNK) and p38 MAPK signaling pathways. Functionally, (Microbial infection) Plays a role in the antiviral response against alphavirus infection; impairs early viral mRNA translation of the incoming genomic virus RNA, thus preventing alphavirus replication. Its function is as follows. (Microbial infection) Plays a role in modulating the adaptive immune response to Yellow fever virus infection; promotes dendritic cells to initiate autophagy and antigene presentation to both CD4(+) and CD8(+) T-cells under amino acid starvation. This is eIF-2-alpha kinase GCN2 from Mus musculus (Mouse).